The chain runs to 725 residues: Catalase B (725 aa).

The first 15 residues, 1 to 15, serve as a signal peptide directing secretion; that stretch reads MRALSLASLIGIASA. A propeptide spanning residues 16–27 is cleaved from the precursor; sequence ACPYMTGELERR. An N-linked (GlcNAc...) asparagine glycan is attached at asparagine 50. Histidine 101 is a catalytic residue. Residue asparagine 119 is glycosylated (N-linked (GlcNAc...) asparagine). Asparagine 174 is a catalytic residue. Residue tyrosine 388 participates in heme binding. N-linked (GlcNAc...) asparagine glycans are attached at residues asparagine 447, asparagine 550, and asparagine 645.

Belongs to the catalase family. As to quaternary structure, homotetramer. Heme is required as a cofactor.

Its subcellular location is the secreted. It carries out the reaction 2 H2O2 = O2 + 2 H2O. Its function is as follows. Occurs in almost all aerobically respiring organisms and serves to protect cells from the toxic effects of hydrogen peroxide through its degradation into water and oxygen. The sequence is that of Catalase B (catB) from Aspergillus oryzae (strain ATCC 42149 / RIB 40) (Yellow koji mold).